The sequence spans 580 residues: Adenine deaminase 2 (580 aa).

The protein belongs to the metallo-dependent hydrolases superfamily. Adenine deaminase family. It depends on Mn(2+) as a cofactor.

The enzyme catalyses adenine + H2O + H(+) = hypoxanthine + NH4(+). The sequence is that of Adenine deaminase 2 from Latilactobacillus sakei subsp. sakei (strain 23K) (Lactobacillus sakei subsp. sakei).